Here is a 223-residue protein sequence, read N- to C-terminus: Kinetochore protein Spc25 (223 aa).

A coiled-coil region spans residues 51–119 (RHQRKVGKLQ…NEIMERIQTL (69 aa)).

Belongs to the SPC25 family. Component of the Ndc80 complex, which is composed of Ndc80, Nuf2 and Spc25.

It localises to the nucleus. It is found in the chromosome. Its subcellular location is the centromere. The protein localises to the kinetochore. Acts as a component of the essential kinetochore-associated Ndc80 complex, which is required for chromosome segregation and spindle checkpoint activity during meiosis and mitosis. Required for kinetochore integrity and the organization of stable microtubule binding sites in the outer plate of the kinetochore. Participates in SAC signaling that responds specifically to disruptions in spindle microtubule dynamics. The NDC80 complex synergistically enhances the affinity of the SKA1 complex for microtubules and may allow the NDC80 complex to track depolymerizing microtubules. The polypeptide is Kinetochore protein Spc25 (Drosophila teissieri (Fruit fly)).